A 429-amino-acid chain; its full sequence is Inositol-3-phosphate synthase 1 (429 aa).

The helical transmembrane segment at 12–32 (LGVLVVGVGGAVATTMIVGTL) threads the bilayer. NAD(+) contacts are provided by alanine 22, valine 23, aspartate 79, alanine 116, alanine 165, threonine 167, tyrosine 201, serine 244, arginine 276, aspartate 277, and lysine 290.

This sequence belongs to the myo-inositol 1-phosphate synthase family. Homotetramer. Requires NAD(+) as cofactor.

Its subcellular location is the membrane. The catalysed reaction is D-glucose 6-phosphate = 1D-myo-inositol 3-phosphate. The protein operates within polyol metabolism; myo-inositol biosynthesis; myo-inositol from D-glucose 6-phosphate: step 1/2. Its function is as follows. Key enzyme in myo-inositol biosynthesis pathway that catalyzes the conversion of glucose 6-phosphate to 1D-myo-inositol 3-phosphate in a NAD-dependent manner. This chain is Inositol-3-phosphate synthase 1, found in Bacteroides thetaiotaomicron (strain ATCC 29148 / DSM 2079 / JCM 5827 / CCUG 10774 / NCTC 10582 / VPI-5482 / E50).